The following is a 442-amino-acid chain: tRNA modification GTPase MnmE (442 aa).

Residues Arg23, Glu82, and Lys121 each coordinate (6S)-5-formyl-5,6,7,8-tetrahydrofolate. A TrmE-type G domain is found at 217–363 (PFKIAIIGET…LVDLLTKYIN (147 aa)). A K(+)-binding site is contributed by Asn227. GTP contacts are provided by residues 227 to 232 (NVGKSS), 246 to 252 (SNIKGST), and 271 to 274 (DTAG). Position 231 (Ser231) interacts with Mg(2+). K(+) contacts are provided by Ser246, Ile248, and Ser251. A Mg(2+)-binding site is contributed by Thr252. Lys442 serves as a coordination point for (6S)-5-formyl-5,6,7,8-tetrahydrofolate.

The protein belongs to the TRAFAC class TrmE-Era-EngA-EngB-Septin-like GTPase superfamily. TrmE GTPase family. Homodimer. Heterotetramer of two MnmE and two MnmG subunits. K(+) serves as cofactor.

The protein resides in the cytoplasm. Its function is as follows. Exhibits a very high intrinsic GTPase hydrolysis rate. Involved in the addition of a carboxymethylaminomethyl (cmnm) group at the wobble position (U34) of certain tRNAs, forming tRNA-cmnm(5)s(2)U34. This Mycoplasma genitalium (strain ATCC 33530 / DSM 19775 / NCTC 10195 / G37) (Mycoplasmoides genitalium) protein is tRNA modification GTPase MnmE.